The following is a 609-amino-acid chain: Forkhead box protein O (609 aa).

Disordered stretches follow at residues 1-89 and 181-263; these read MDGF…KNSS and KSVR…SSCG. Thr43 bears the Phosphothreonine; by PKB/AKT1 mark. Over residues 62–79 the composition is skewed to polar residues; the sequence is TKASNQQLASGDPQQAMQ. Residues 80–89 show a composition bias toward low complexity; the sequence is NANAAKKNSS. A DNA-binding region (fork-head) is located at residues 94–200; sequence WGNLSYADLI…ETSRYEKRRG (107 aa). At Ser189 the chain carries Phosphoserine; by PKB/AKT1. Polar residues-rich tracts occupy residues 220–229 and 254–263; these read ATPSPSSSVS and RASSNASSCG. Ser257 is modified (phosphoserine; by PKB/AKT1). Phosphoserine occurs at positions 260, 261, and 266. Disordered regions lie at residues 321–365 and 384–411; these read AASG…QGQG and RDGL…DSLN. Positions 327–339 are enriched in pro residues; that stretch reads TQPPPPYQPPQQP. Positions 388–397 are enriched in polar residues; that stretch reads SPNSVTTTMS.

As to quaternary structure, interacts with melt.

Its subcellular location is the cytoplasm. The protein resides in the nucleus. Functionally, transcription factor involved in the regulation of the insulin signaling pathway. Consistently activates both the downstream target Thor\d4EBP and the feedback control target InR. Involved in negative regulation of the cell cycle, modulating cell growth and proliferation. In response to cellular stresses, such as nutrient deprivation or increased levels of reactive oxygen species, foxo is activated and inhibits growth through the action of target genes such as Thor. Foxo activated in the adult fat body can regulate lifespan in adults; an insulin peptide itself may function as one secondary messenger of insulin-regulated aging. Also regulates Lip4, homolog of human acid lipases, thereby acting as a key modulator of lipid metabolism by insulin signaling and integrates insulin responses to glucose and lipid homeostasis. This Drosophila virilis (Fruit fly) protein is Forkhead box protein O.